Here is a 213-residue protein sequence, read N- to C-terminus: Chloramphenicol acetyltransferase 3 (213 aa).

H189 (proton acceptor) is an active-site residue.

The protein belongs to the chloramphenicol acetyltransferase family. As to quaternary structure, homotrimer.

The enzyme catalyses chloramphenicol + acetyl-CoA = chloramphenicol 3-acetate + CoA. In terms of biological role, this enzyme is an effector of chloramphenicol resistance in bacteria. The sequence is that of Chloramphenicol acetyltransferase 3 (cat3) from Escherichia coli.